The sequence spans 70 residues: MQGVQAQIEDLETKLAFQELTVEELNQEVIKLNRLVAHQQHQIHMLIGKLQDMEPSNMATQAEETPPPHY.

It belongs to the SlyX family.

The sequence is that of Protein SlyX homolog from Shewanella baltica (strain OS155 / ATCC BAA-1091).